We begin with the raw amino-acid sequence, 161 residues long: AQDAITAVINSADVQGKYLDTAALEKLKAYFSTGELRVRAATTISANAAAIVKEAVAKSLLYSDITRPGGNMYTTRRYAACIRDLDYYLRYATYAMLAGDPSILDERVLNGLKETYNSLGVPVGATVQAIQAIKEVTASLVGAKAGKEMGIYLDYISSGLS.

Asn-71 is subject to N4-methylasparagine. Cys-81 contacts (2R,3E)-phycocyanobilin.

It belongs to the phycobiliprotein family. Heterodimer of an alpha and a beta chain. Post-translationally, contains one covalently linked phycocyanobilin chromophore.

The protein resides in the cellular thylakoid membrane. Its function is as follows. Light-harvesting photosynthetic bile pigment-protein from the phycobiliprotein complex. Allophycocyanin has a maximum absorption at approximately 650 nanometers. This is Allophycocyanin beta chain (apcB) from Anabaena variabilis.